A 228-amino-acid polypeptide reads, in one-letter code: Ribosomal RNA large subunit methyltransferase E (228 aa).

S-adenosyl-L-methionine contacts are provided by G76, W78, D99, D115, and D139. K179 functions as the Proton acceptor in the catalytic mechanism.

It belongs to the class I-like SAM-binding methyltransferase superfamily. RNA methyltransferase RlmE family.

It is found in the cytoplasm. The catalysed reaction is uridine(2552) in 23S rRNA + S-adenosyl-L-methionine = 2'-O-methyluridine(2552) in 23S rRNA + S-adenosyl-L-homocysteine + H(+). Functionally, specifically methylates the uridine in position 2552 of 23S rRNA at the 2'-O position of the ribose in the fully assembled 50S ribosomal subunit. This Nitrobacter hamburgensis (strain DSM 10229 / NCIMB 13809 / X14) protein is Ribosomal RNA large subunit methyltransferase E.